The primary structure comprises 1204 residues: Erythroid differentiation-related factor 1 (1204 aa).

Disordered stretches follow at residues 1 to 30 (MGDAKEAGAEGPPAGAAAREGLSLLSQAES), 220 to 264 (QPVS…ASSQ), 483 to 527 (PKKE…SDDS), and 586 to 613 (KKESDLPAADPSTPIPLKYEDESSRGGP). Composition is skewed to low complexity over residues 9-30 (AEGPPAGAAAREGLSLLSQAES), 223-241 (SSTTEQQESSSSDQTNDSE), and 253-263 (SSVSEDPSASS). The segment covering 496 to 513 (NSDESYSEEEEEMPDSDE) has biased composition (acidic residues). 2 TPR repeats span residues 693 to 726 (CCLCTNMLSEVLLFLSQYLTLCGDIQLMLAQNAN) and 920 to 953 (DIHPAVWDSVNWELSTTYFTMATLQQDYAPLSRK).

It is found in the nucleus. Its function is as follows. Transcription factor involved in erythroid differentiation. Involved in transcriptional activation of the globin gene. In Pongo abelii (Sumatran orangutan), this protein is Erythroid differentiation-related factor 1 (EDRF1).